Here is a 100-residue protein sequence, read N- to C-terminus: MELTPREKDKLLIFTAALLAERRKARGVKLNYPESIAYITATIMEGARDGKTVAELMGEGRTLLKRQDVMEGVPEMIHEVQVEATFPDGTKLVTVHDPIV.

This sequence belongs to the urease gamma subunit family. As to quaternary structure, heterotrimer of UreA (gamma), UreB (beta) and UreC (alpha) subunits. Three heterotrimers associate to form the active enzyme.

Its subcellular location is the cytoplasm. The enzyme catalyses urea + 2 H2O + H(+) = hydrogencarbonate + 2 NH4(+). The protein operates within nitrogen metabolism; urea degradation; CO(2) and NH(3) from urea (urease route): step 1/1. The protein is Urease subunit gamma of Alcanivorax borkumensis (strain ATCC 700651 / DSM 11573 / NCIMB 13689 / SK2).